A 234-amino-acid polypeptide reads, in one-letter code: Sugar fermentation stimulation protein A (234 aa).

A DNA-binding region (H-T-H motif) is located at residues 201–220 (LLTEAQQRGVEILAYKAEIS).

The protein belongs to the SfsA family.

In terms of biological role, binds to DNA non-specifically. Could be a regulatory factor involved in maltose metabolism. In Escherichia fergusonii (strain ATCC 35469 / DSM 13698 / CCUG 18766 / IAM 14443 / JCM 21226 / LMG 7866 / NBRC 102419 / NCTC 12128 / CDC 0568-73), this protein is Sugar fermentation stimulation protein A.